Reading from the N-terminus, the 174-residue chain is Shikimate kinase 2 (174 aa).

12-17 (GCGKTT) is an ATP binding site. Residues Thr-16 and Asp-32 each coordinate Mg(2+). Substrate contacts are provided by Asp-34, Arg-58, and Gly-79. The interval 112-126 (QAAPEEDLRPTLTGK) is LID domain. Arg-120 lines the ATP pocket. Arg-139 serves as a coordination point for substrate.

The protein belongs to the shikimate kinase family. AroL subfamily. As to quaternary structure, monomer. Requires Mg(2+) as cofactor.

The protein localises to the cytoplasm. The enzyme catalyses shikimate + ATP = 3-phosphoshikimate + ADP + H(+). Its pathway is metabolic intermediate biosynthesis; chorismate biosynthesis; chorismate from D-erythrose 4-phosphate and phosphoenolpyruvate: step 5/7. Catalyzes the specific phosphorylation of the 3-hydroxyl group of shikimic acid using ATP as a cosubstrate. In Escherichia coli O81 (strain ED1a), this protein is Shikimate kinase 2.